Consider the following 319-residue polypeptide: 4-diphosphocytidyl-2-C-methyl-D-erythritol kinase (319 aa).

Lys-21 is an active-site residue. 106–116 contributes to the ATP binding site; sequence PIGAGLAGGSS. Asp-148 is an active-site residue.

The protein belongs to the GHMP kinase family. IspE subfamily.

It catalyses the reaction 4-CDP-2-C-methyl-D-erythritol + ATP = 4-CDP-2-C-methyl-D-erythritol 2-phosphate + ADP + H(+). It functions in the pathway isoprenoid biosynthesis; isopentenyl diphosphate biosynthesis via DXP pathway; isopentenyl diphosphate from 1-deoxy-D-xylulose 5-phosphate: step 3/6. Catalyzes the phosphorylation of the position 2 hydroxy group of 4-diphosphocytidyl-2C-methyl-D-erythritol. This Prochlorococcus marinus (strain SARG / CCMP1375 / SS120) protein is 4-diphosphocytidyl-2-C-methyl-D-erythritol kinase.